A 108-amino-acid chain; its full sequence is Class I hydrophobin hgfII (108 aa).

A signal peptide spans 1–19; sequence MFSRIAAVSFLALPLLAAA. Cystine bridges form between cysteine 28-cysteine 89, cysteine 35-cysteine 83, cysteine 36-cysteine 69, and cysteine 90-cysteine 103. Asparagine 92 is a glycosylation site (N-linked (GlcNAc...) asparagine).

It belongs to the fungal hydrophobin family. In terms of assembly, self-assembles to form functional amyloid fibrils called rodlets with a diameter of 15-30 nm. Self-assembly into fibrillar rodlets occurs spontaneously at hydrophobic:hydrophilic interfaces and the rodlets further associate laterally to form amphipathic monolayers. In terms of tissue distribution, highky expressed in hyphae cultured in liquid medium.

It localises to the secreted. Its subcellular location is the cell wall. Its function is as follows. Aerial growth, conidiation, and dispersal of filamentous fungi in the environment rely upon a capability of their secreting small amphipathic proteins called hydrophobins (HPBs) with low sequence identity. Class I can self-assemble into an outermost layer of rodlet bundles on aerial cell surfaces, conferring cellular hydrophobicity that supports fungal growth, development and dispersal; whereas Class II form highly ordered films at water-air interfaces through intermolecular interactions but contribute nothing to the rodlet structure. HgfII is a class I hydrophobin that is involved in cell surface hydrophobicity and might play a key role during the growth and development of hyphae cultured in liquid medium. This chain is Class I hydrophobin hgfII, found in Grifola frondosa (Maitake).